Reading from the N-terminus, the 112-residue chain is MRCKTLTAAAAVLLMLTAGCSTLERVVYRPDINQGNYLTPTDVAKVRVGMTQQQVAYALGTPMMTDPFGTNTWFYVFRQQPGHENVTQQTLTLTFNSSGVLTNIDNKPALTK.

An N-terminal signal peptide occupies residues 1–19 (MRCKTLTAAAAVLLMLTAG). Cys20 carries N-palmitoyl cysteine lipidation. The S-diacylglycerol cysteine moiety is linked to residue Cys20.

Belongs to the BamE family. In terms of assembly, part of the Bam complex, which is composed of the outer membrane protein BamA, and four lipoproteins BamB, BamC, BamD and BamE.

Its subcellular location is the cell outer membrane. Part of the outer membrane protein assembly complex, which is involved in assembly and insertion of beta-barrel proteins into the outer membrane. This Salmonella typhimurium (strain LT2 / SGSC1412 / ATCC 700720) protein is Outer membrane protein assembly factor BamE.